The chain runs to 195 residues: Xanthine phosphoribosyltransferase (195 aa).

Xanthine contacts are provided by L20 and N27. 128–132 (ANGQA) lines the 5-phospho-alpha-D-ribose 1-diphosphate pocket. K156 provides a ligand contact to xanthine.

It belongs to the purine/pyrimidine phosphoribosyltransferase family. Xpt subfamily. Homodimer.

It localises to the cytoplasm. The enzyme catalyses XMP + diphosphate = xanthine + 5-phospho-alpha-D-ribose 1-diphosphate. The protein operates within purine metabolism; XMP biosynthesis via salvage pathway; XMP from xanthine: step 1/1. Functionally, converts the preformed base xanthine, a product of nucleic acid breakdown, to xanthosine 5'-monophosphate (XMP), so it can be reused for RNA or DNA synthesis. The sequence is that of Xanthine phosphoribosyltransferase from Lactiplantibacillus plantarum (strain ATCC BAA-793 / NCIMB 8826 / WCFS1) (Lactobacillus plantarum).